Reading from the N-terminus, the 201-residue chain is FMN-dependent NADH:quinone oxidoreductase (201 aa).

FMN is bound by residues S10, 16–18 (SQS), 96–99 (MYNF), and 140–143 (SRGG).

It belongs to the azoreductase type 1 family. Homodimer. Requires FMN as cofactor.

It carries out the reaction 2 a quinone + NADH + H(+) = 2 a 1,4-benzosemiquinone + NAD(+). The catalysed reaction is N,N-dimethyl-1,4-phenylenediamine + anthranilate + 2 NAD(+) = 2-(4-dimethylaminophenyl)diazenylbenzoate + 2 NADH + 2 H(+). Its function is as follows. Quinone reductase that provides resistance to thiol-specific stress caused by electrophilic quinones. Functionally, also exhibits azoreductase activity. Catalyzes the reductive cleavage of the azo bond in aromatic azo compounds to the corresponding amines. The chain is FMN-dependent NADH:quinone oxidoreductase from Escherichia coli O6:K15:H31 (strain 536 / UPEC).